The sequence spans 141 residues: 3-hydroxyacyl-[acyl-carrier-protein] dehydratase FabZ (141 aa).

The active site involves histidine 48.

It belongs to the thioester dehydratase family. FabZ subfamily.

The protein resides in the cytoplasm. It catalyses the reaction a (3R)-hydroxyacyl-[ACP] = a (2E)-enoyl-[ACP] + H2O. Functionally, involved in unsaturated fatty acids biosynthesis. Catalyzes the dehydration of short chain beta-hydroxyacyl-ACPs and long chain saturated and unsaturated beta-hydroxyacyl-ACPs. The sequence is that of 3-hydroxyacyl-[acyl-carrier-protein] dehydratase FabZ from Herpetosiphon aurantiacus (strain ATCC 23779 / DSM 785 / 114-95).